The sequence spans 23 residues: Coenzyme PQQ synthesis protein A (23 aa).

The pyrroloquinoline quinone (Glu-Tyr) cross-link spans 15–19 (EVTLY).

This sequence belongs to the PqqA family.

It functions in the pathway cofactor biosynthesis; pyrroloquinoline quinone biosynthesis. Functionally, required for coenzyme pyrroloquinoline quinone (PQQ) biosynthesis. PQQ is probably formed by cross-linking a specific glutamate to a specific tyrosine residue and excising these residues from the peptide. The protein is Coenzyme PQQ synthesis protein A of Pseudomonas aeruginosa (strain UCBPP-PA14).